A 295-amino-acid chain; its full sequence is Lipoyl synthase (295 aa).

Cys34, Cys39, Cys45, Cys60, Cys64, Cys67, and Ser273 together coordinate [4Fe-4S] cluster. The 217-residue stretch at 46–262 (WNKRHATIMI…KLMAYAKGFS (217 aa)) folds into the Radical SAM core domain.

This sequence belongs to the radical SAM superfamily. Lipoyl synthase family. Requires [4Fe-4S] cluster as cofactor.

Its subcellular location is the cytoplasm. The enzyme catalyses [[Fe-S] cluster scaffold protein carrying a second [4Fe-4S](2+) cluster] + N(6)-octanoyl-L-lysyl-[protein] + 2 oxidized [2Fe-2S]-[ferredoxin] + 2 S-adenosyl-L-methionine + 4 H(+) = [[Fe-S] cluster scaffold protein] + N(6)-[(R)-dihydrolipoyl]-L-lysyl-[protein] + 4 Fe(3+) + 2 hydrogen sulfide + 2 5'-deoxyadenosine + 2 L-methionine + 2 reduced [2Fe-2S]-[ferredoxin]. It functions in the pathway protein modification; protein lipoylation via endogenous pathway; protein N(6)-(lipoyl)lysine from octanoyl-[acyl-carrier-protein]: step 2/2. Its function is as follows. Catalyzes the radical-mediated insertion of two sulfur atoms into the C-6 and C-8 positions of the octanoyl moiety bound to the lipoyl domains of lipoate-dependent enzymes, thereby converting the octanoylated domains into lipoylated derivatives. This chain is Lipoyl synthase, found in Anaplasma marginale (strain St. Maries).